A 556-amino-acid chain; its full sequence is Sphingomyelinase C (556 aa).

The N-terminal stretch at 1-27 is a signal peptide; that stretch reads MRIKKYTKVRLLVNCCLLLFFLIDCGA.

It localises to the secreted. It carries out the reaction a sphingomyelin + H2O = phosphocholine + an N-acylsphing-4-enine + H(+). The polypeptide is Sphingomyelinase C (sph) (Leptospira interrogans).